Reading from the N-terminus, the 193-residue chain is Ribonuclease HII (193 aa).

The RNase H type-2 domain occupies 15–193; it reads YIVAGIDEAG…PYHRRSFKCC (179 aa). A divalent metal cation-binding residues include aspartate 21, glutamate 22, and aspartate 112.

The protein belongs to the RNase HII family. Requires Mn(2+) as cofactor. It depends on Mg(2+) as a cofactor.

The protein resides in the cytoplasm. It carries out the reaction Endonucleolytic cleavage to 5'-phosphomonoester.. Its function is as follows. Endonuclease that specifically degrades the RNA of RNA-DNA hybrids. This Rickettsia felis (strain ATCC VR-1525 / URRWXCal2) (Rickettsia azadi) protein is Ribonuclease HII.